The following is an 84-amino-acid chain: Cell division topological specificity factor (84 aa).

The protein belongs to the MinE family.

In terms of biological role, prevents the cell division inhibition by proteins MinC and MinD at internal division sites while permitting inhibition at polar sites. This ensures cell division at the proper site by restricting the formation of a division septum at the midpoint of the long axis of the cell. The polypeptide is Cell division topological specificity factor (Cupriavidus metallidurans (strain ATCC 43123 / DSM 2839 / NBRC 102507 / CH34) (Ralstonia metallidurans)).